Here is a 253-residue protein sequence, read N- to C-terminus: Ras-like protein family member 11A-like (253 aa).

GTP contacts are provided by residues 43-50 (GASNVGKT), 90-97 (DTPCVSLQ), and 157-160 (NKSD). Residues 213–233 (GNGEKRKGGLHLARPKSPNMQ) form a disordered region.

This sequence belongs to the small GTPase superfamily. Ras family.

Its subcellular location is the nucleus. It is found in the nucleolus. It catalyses the reaction GTP + H2O = GDP + phosphate + H(+). Functionally, regulator of rDNA transcription. This is Ras-like protein family member 11A-like from Danio rerio (Zebrafish).